The sequence spans 380 residues: Erythronate-4-phosphate dehydrogenase (380 aa).

The substrate site is built by S45 and T66. NAD(+) is bound by residues 126 to 127 (QV), D146, T174, 205 to 207 (ASR), and D231. R207 is an active-site residue. E236 is a catalytic residue. H253 functions as the Proton donor in the catalytic mechanism. G256 provides a ligand contact to NAD(+). Residue Y257 participates in substrate binding.

The protein belongs to the D-isomer specific 2-hydroxyacid dehydrogenase family. PdxB subfamily. In terms of assembly, homodimer.

It localises to the cytoplasm. It catalyses the reaction 4-phospho-D-erythronate + NAD(+) = (R)-3-hydroxy-2-oxo-4-phosphooxybutanoate + NADH + H(+). It functions in the pathway cofactor biosynthesis; pyridoxine 5'-phosphate biosynthesis; pyridoxine 5'-phosphate from D-erythrose 4-phosphate: step 2/5. Functionally, catalyzes the oxidation of erythronate-4-phosphate to 3-hydroxy-2-oxo-4-phosphonooxybutanoate. This chain is Erythronate-4-phosphate dehydrogenase, found in Azotobacter vinelandii (strain DJ / ATCC BAA-1303).